The sequence spans 530 residues: Probable histone-arginine methyltransferase CARMER (530 aa).

In terms of domain architecture, SAM-dependent MTase PRMT-type spans 141–450 (ASQYFQFYGY…QSYDVTIDLH (310 aa)). Positions 154, 163, 187, 209, 238, and 266 each coordinate S-adenosyl-L-methionine. An Asymmetric dimethylarginine; by autocatalysis modification is found at Arg501.

The protein belongs to the class I-like SAM-binding methyltransferase superfamily. Protein arginine N-methyltransferase family. In terms of assembly, homodimer. Interacts with EcR. In terms of processing, the dimethylated protein is the major form. As to expression, present ubiquitously (at protein level). Expressed in the imaginal disks and in larval brains, and to a much lesser degree in the polytene larval tissue such as salivary glands.

It localises to the cytoplasm. The protein resides in the nucleus. The catalysed reaction is L-arginyl-[protein] + 2 S-adenosyl-L-methionine = N(omega),N(omega)-dimethyl-L-arginyl-[protein] + 2 S-adenosyl-L-homocysteine + 2 H(+). Its function is as follows. Methylates (mono- and asymmetric dimethylation) the guanidino nitrogens of arginyl residues in proteins. May methylate histone H3 at 'Arg-17' and activate transcription via chromatin remodeling. Coordinates ecdysone-mediated expression of cell death genes. The protein is Probable histone-arginine methyltransferase CARMER (Art4) of Drosophila melanogaster (Fruit fly).